The chain runs to 141 residues: Hemoglobin subunit alpha-A (141 aa).

The Globin domain maps to 1-141; sequence VLSAADKTNV…VGAVLTAKYR (141 aa). His58 contacts O2. Position 87 (His87) interacts with heme b.

Belongs to the globin family. In terms of assembly, heterotetramer of two alpha chains and two beta chains. As to expression, red blood cells.

Its function is as follows. Involved in oxygen transport from the lung to the various peripheral tissues. This chain is Hemoglobin subunit alpha-A (HBAA), found in Cygnus olor (Mute swan).